The primary structure comprises 183 residues: Translation initiation factor IF-3 (183 aa).

Belongs to the IF-3 family. As to quaternary structure, monomer.

It is found in the cytoplasm. Functionally, IF-3 binds to the 30S ribosomal subunit and shifts the equilibrium between 70S ribosomes and their 50S and 30S subunits in favor of the free subunits, thus enhancing the availability of 30S subunits on which protein synthesis initiation begins. The sequence is that of Translation initiation factor IF-3 from Vibrio cholerae serotype O1 (strain ATCC 39315 / El Tor Inaba N16961).